A 489-amino-acid polypeptide reads, in one-letter code: N-succinylglutamate 5-semialdehyde dehydrogenase 1 (489 aa).

223-228 provides a ligand contact to NAD(+); the sequence is GSSRTG. Catalysis depends on residues Glu246 and Cys280.

This sequence belongs to the aldehyde dehydrogenase family. AstD subfamily.

The enzyme catalyses N-succinyl-L-glutamate 5-semialdehyde + NAD(+) + H2O = N-succinyl-L-glutamate + NADH + 2 H(+). It functions in the pathway amino-acid degradation; L-arginine degradation via AST pathway; L-glutamate and succinate from L-arginine: step 4/5. In terms of biological role, catalyzes the NAD-dependent reduction of succinylglutamate semialdehyde into succinylglutamate. The sequence is that of N-succinylglutamate 5-semialdehyde dehydrogenase 1 from Pseudoalteromonas translucida (strain TAC 125).